Reading from the N-terminus, the 724-residue chain is Methionine--tRNA ligase (724 aa).

The short motif at 12-22 (PYVNNIPHLGN) is the 'HIGH' region element. Residues Cys143, Cys146, Cys155, and Cys158 each coordinate Zn(2+). The short motif at 330-334 (KFSKS) is the 'KMSKS' region element. Lys333 contributes to the ATP binding site. The region spanning 560–665 (FREKVLLRVV…KNPIAGERII (106 aa)) is the tRNA-binding domain.

This sequence belongs to the class-I aminoacyl-tRNA synthetase family. MetG type 1 subfamily. In terms of assembly, homodimer. Zn(2+) is required as a cofactor.

It localises to the cytoplasm. The enzyme catalyses tRNA(Met) + L-methionine + ATP = L-methionyl-tRNA(Met) + AMP + diphosphate. Is required not only for elongation of protein synthesis but also for the initiation of all mRNA translation through initiator tRNA(fMet) aminoacylation. The sequence is that of Methionine--tRNA ligase from Borreliella afzelii (strain PKo) (Borrelia afzelii).